A 314-amino-acid polypeptide reads, in one-letter code: MIEIEKPKIETVELNEDAKYGKFVIEPLERGYGTTLGNSLRRILLSSLPGAAVTAIQIDGVLHEFSTVEGVVEDVTTIILNLKKLALKIYSEEEKTLEIDVQGEGIVTAADITHDSDVEILNPDLHIATLAKDAHFRVRLTAKRGRGYTPADANKSEDQPIGVIPIDSIYTPVSRVTYQVEKTRVGQVANYDKLTLDVWTDGSIGPKEAISLGAKILTEHLNIFVGLTDEAQNAEIMVEKEEDQKEKVLEMTIEELDLSVRSYNCLKRAGINTVQELANKTEEDMMKVRNLGRKSLEEVKHKLEELGLGLRKDD.

Residues 1 to 228 (MIEIEKPKIE…EHLNIFVGLT (228 aa)) form an alpha N-terminal domain (alpha-NTD) region. The alpha C-terminal domain (alpha-CTD) stretch occupies residues 245–314 (KEKVLEMTIE…ELGLGLRKDD (70 aa)).

Belongs to the RNA polymerase alpha chain family. Homodimer. The RNAP catalytic core consists of 2 alpha, 1 beta, 1 beta' and 1 omega subunit. When a sigma factor is associated with the core the holoenzyme is formed, which can initiate transcription.

It carries out the reaction RNA(n) + a ribonucleoside 5'-triphosphate = RNA(n+1) + diphosphate. In terms of biological role, DNA-dependent RNA polymerase catalyzes the transcription of DNA into RNA using the four ribonucleoside triphosphates as substrates. The polypeptide is DNA-directed RNA polymerase subunit alpha (Bacillus thuringiensis (strain Al Hakam)).